The following is a 212-amino-acid chain: N-(5'-phosphoribosyl)anthranilate isomerase (212 aa).

This sequence belongs to the TrpF family.

The catalysed reaction is N-(5-phospho-beta-D-ribosyl)anthranilate = 1-(2-carboxyphenylamino)-1-deoxy-D-ribulose 5-phosphate. It functions in the pathway amino-acid biosynthesis; L-tryptophan biosynthesis; L-tryptophan from chorismate: step 3/5. The protein is N-(5'-phosphoribosyl)anthranilate isomerase of Microcystis aeruginosa (strain NIES-843 / IAM M-2473).